The chain runs to 190 residues: Myosin, light chain 1, alkali; skeletal, fast (190 aa).

Over residues 1–17 the composition is skewed to basic and acidic residues; sequence MAPKKDAKKPEPPKKAE. Residues 1–33 form a disordered region; that stretch reads MAPKKDAKKPEPPKKAEPAPAPAPAPEPPKADA. Over residues 19-28 the composition is skewed to pro residues; sequence APAPAPAPEP. 2 consecutive EF-hand domains span residues 46-81 and 123-158; these read DQME…LGQN and ATYD…LGEK.

Myosin is a hexamer of 2 heavy chains and 4 light chains. Does not bind calcium. In terms of tissue distribution, expressed in fast muscle fibers during skeletal muscle differentiation.

Functionally, non-regulatory myosin light chain required for proper formation and/or maintenance of myofibers, and thus appropriate muscle function. In Danio rerio (Zebrafish), this protein is Myosin, light chain 1, alkali; skeletal, fast.